The primary structure comprises 458 residues: Brassinosteroid-related acyltransferase 1 (458 aa).

The active-site Proton acceptor is the His-164.

This sequence belongs to the plant acyltransferase family. Highly expressed in young tissues and vascular bundles. Mostly expressed in young leaves, primary roots, flowers (including petals and sepals), and siliques.

It localises to the endoplasmic reticulum. It is found in the nucleus. The protein operates within plant hormone biosynthesis; brassinosteroid biosynthesis. Brassinosteroids (BR) acyltransferase with acyl-CoA ligase activity toward brassinolide (BL), castasterone (CS), typhasterol (TY), 6-deoxotyphasterol (6-deoxoTY), and 6-deoxocastasterone (6-deoxoCS) and thus converts them to corresponding lauroyl esters. Regulates BR homeostasis and promotes BR-mediated cell growth regulation. Involved in vascular bundle development. In Arabidopsis thaliana (Mouse-ear cress), this protein is Brassinosteroid-related acyltransferase 1.